A 952-amino-acid chain; its full sequence is MAWSIALLTPPFFGPGRHVQAKEYREPRGCVMKMSSLKAPVLRIQATEYREPRGRVKMMSSLQAPLLTIQSFSGLRAPSALDYLGRPSPGFLVKYKLAKSSGREKASRCVPKAMFERFTEKAIKVIMLSQEEARRLGHNFVGTEQILLGLIGEGTGIAAKVLKSMGINLKDSRVEVEKIIGRGSGFVAVEIPFTPRAKRVLELSLEEARQLGHNYIGSEHLLLGLLREGEGVAARVLENLGADPSNIRTQVIRMVGENNEVTASVGGGSSGNSKMPTLEEYGTNLTKLAEEGKLDPVVGRQPQIERVVQILARRTKNNPCLIGEPGVGKTAIAEGLAQRIASGDVPETIEGKTVITLDMGLLVAGTKYRGEFEERLKKLMEEIRQSDEIILFIDEVHTLIGAGAAEGAIDAANILKPALARGELQCIGATTIDEYRKHIEKDPALERRFQPVKVPEPTVEEAIQILQGLRERYEIHHKLRYTDEALVAAAQLSHQYISDRFLPDKAIDLIDEAGSRVRLRHAQLPEEARELEKQLRQITKEKNEAVRSQDFEMAGSHRDREIELKAEIANVLSRGKEVAKAENEAEEGGPTVTESDIQHIVATWTGIPVEKVSSDESSRLLQMEQTLHTRVIGQDEAVKAISRAIRRARVGLKNPNRPIASFIFSGPTGVGKSELAKALAAYYFGSEEAMIRLDMSEFMERHTVSKLIGSPPGYVGYTEGGQLTEAVRRRPYTLVLFDEIEKAHPDVFNMMLQILEDGRLTDSKGRTVDFKNTLLIMTSNVGSSVIEKGGRRIGFDLDHDEKDSSYNRIKSLVTEELKQYFRPEFLNRLDEMIVFRQLTKLEVKEIADIMLKEVVARLEVKEIELQVTERFKERVVDEGFDPSYGARPLRRAIMRLLEDSMAEKMLSRDIKEGDSVIVDVDAEGSVVVLSGTTGRVGGFAAEEAMEDPIPIL.

Residues 1-45 (MAWSIALLTPPFFGPGRHVQAKEYREPRGCVMKMSSLKAPVLRIQ) constitute a chloroplast transit peptide. One can recognise a Clp R domain in the interval 115-257 (FERFTEKAIK…RTQVIRMVGE (143 aa)). Repeat stretches follow at residues 118 to 183 (FTEK…IGRG) and 193 to 257 (FTPR…MVGE). An i region spans residues 278–525 (LEEYGTNLTK…RVRLRHAQLP (248 aa)). 323–330 (GEPGVGKT) contributes to the ATP binding site. Residues 532 to 567 (EKQLRQITKEKNEAVRSQDFEMAGSHRDREIELKAE) enclose the UVR domain. The interval 592–783 (VTESDIQHIV…LLIMTSNVGS (192 aa)) is II. 666 to 673 (GPTGVGKS) lines the ATP pocket.

It belongs to the ClpA/ClpB family. ClpC subfamily. As to quaternary structure, homodimer and homohexamer. Hexamerization upon addition of ATP. Interacts with CLPT1. Interacts with CLPS1. Stably associated with the import machinery. Interacts with CLPF. Requires Mg(2+) as cofactor. In terms of tissue distribution, expressed at low levels in roots and inflorescences. Expressed at very low levels in rosette leaves. Expressed in photosynthetic green tissues with high levels in young, developing leaf tissues.

It is found in the plastid. It localises to the chloroplast stroma. Its subcellular location is the chloroplast membrane. It catalyses the reaction ATP + H2O = ADP + phosphate + H(+). Its function is as follows. Molecular chaperone. May act as a suppressor of FtsH-mediated thylakoid membrane biogenesis and may enhance photoinhibition. Seems not involved in chloroplastic protein import. Probable component of the TIC-associated stromal import motor involved in inner membrane translocation. Has an ATPase activity, but no ADPase activity. Interacts with transit peptides with a positional preference. Localization of the signal sequence at the N-terminal end of a protein seems mandatory for interaction to take place. The sequence is that of Chaperone protein ClpC2, chloroplastic from Arabidopsis thaliana (Mouse-ear cress).